The sequence spans 37 residues: Large ribosomal subunit protein bL36 (37 aa).

The protein belongs to the bacterial ribosomal protein bL36 family.

This is Large ribosomal subunit protein bL36 from Halorhodospira halophila (strain DSM 244 / SL1) (Ectothiorhodospira halophila (strain DSM 244 / SL1)).